A 506-amino-acid polypeptide reads, in one-letter code: Putative basic amino acid antiporter YfcC (506 aa).

The next 13 helical transmembrane spans lie at 19–39 (LVIIFFVAILTSLATWVVPVG), 107–127 (GTAVGIIMFMLVIGGAFGIVM), 148–168 (ILFIPALFILFSLGGAVFGMG), 171–191 (AVAFAIIIAPLMVRLGYDSIT), 208–228 (WMNPFCVVVAQGIAGVPVLSG), 231–251 (LRIVVWVIATLIGLIFTMVYA), 287–307 (WLVLIVLTAVMVWVIWGVIVN), 310–330 (FIPEIASQFFTMGLVIGIIGV), 352–372 (MMIAPALLVGFAKGILLLVGN), 398–418 (AVAAWFMLLFQAVFNFFVTSG), 419–439 (SGQAALTMPLLAPLGDLVGVN), 442–462 (VTVLAFQFGDGFSHIIYPTSA), and 485–505 (LLGLLFIMSSVVVIGAQLMGY).

This sequence to H.influenzae HI_0594. The protein to B.subtilis YcgA.

The protein localises to the cell inner membrane. In terms of biological role, metabolomic profiling of different yfcC over-expression and deletion strains suggests that it may affect the glyoxylate shunt. The protein is Putative basic amino acid antiporter YfcC (yfcC) of Escherichia coli (strain K12).